Here is a 451-residue protein sequence, read N- to C-terminus: PTS system galactose-specific EIIC component (451 aa).

Residues 8-427 (LNKTLMPLAS…VLNVLIYYPF (420 aa)) form the PTS EIIC type-3 domain. The next 11 helical transmembrane spans lie at 40–60 (LGIALLTIIGYFPVPAWVDFL), 69–89 (FSAVIGAVTSALAIYVTYNFA), 104–124 (GLLSIASLLMLMPQIITVPVV), 151–171 (TGSTGLIVAIIIGFIVSLVYI), 190–210 (VVDSLSPAIISMVIFCLMFGI), 239–259 (ANPWVLMGIFTFGNFLWFFGI), 263–283 (LIGGILNPLLLTMSYANIDAY), 296–316 (IVFAVGANAWGGSGNTYGLVI), 332–352 (LGAIPSIFNISEPLLFGLPMM), 356–376 (LFFIPLVFQPAILGTVALGLA), and 403–423 (ISGGLPFLIIFAICLVLNVLI).

Its subcellular location is the cell membrane. Its function is as follows. The phosphoenolpyruvate-dependent sugar phosphotransferase system (PTS), a major carbohydrate active transport system, catalyzes the phosphorylation of incoming sugar substrates concomitant with their translocation across the cell membrane. Involved in galactose transport with PtcA and PtcB. The protein is PTS system galactose-specific EIIC component of Lactococcus lactis subsp. cremoris (strain MG1363).